The following is a 234-amino-acid chain: ATP synthase subunit a 2 (234 aa).

Transmembrane regions (helical) follow at residues 20–40, 78–98, 107–127, 169–189, and 194–214; these read ATLIFTWLVMGVLVVGSWFVT, YLPFIGTLFIFIALSNLLSVI, SLSTTTALALCVFFAVPLYGV, VMSGTMIVGILLSVAPLFFPV, and LGLLTGVIQAYIFAILAMVFI.

It belongs to the ATPase A chain family. F-type ATPases have 2 components, CF(1) - the catalytic core - and CF(0) - the membrane proton channel. CF(1) has five subunits: alpha(3), beta(3), gamma(1), delta(1), epsilon(1). CF(0) has four main subunits: a, b, b' and c.

It is found in the cellular thylakoid membrane. Its function is as follows. Key component of the proton channel; it plays a direct role in the translocation of protons across the membrane. This Acaryochloris marina (strain MBIC 11017) protein is ATP synthase subunit a 2.